A 1891-amino-acid polypeptide reads, in one-letter code: Protein TIC 214 (1891 aa).

A run of 6 helical transmembrane segments spans residues 18–38 (IINS…FSIG), 64–84 (FITG…HLAL), 87–107 (PHTI…WNNH), 124–144 (LSIQ…HFIL), 172–192 (VGWL…LVWI), and 221–241 (IFSI…PSPI). 3 disordered regions span residues 248–300 (EASK…EGWD), 788–807 (EEQT…DNKR), and 1580–1607 (KNRS…NLSP). The segment covering 256 to 268 (VESEEERDVEIET) has biased composition (acidic residues). Over residues 1582–1601 (RSQEAKEPPSQRERGSDIEN) the composition is skewed to basic and acidic residues.

This sequence belongs to the TIC214 family. As to quaternary structure, part of the Tic complex.

It localises to the plastid. The protein resides in the chloroplast inner membrane. Involved in protein precursor import into chloroplasts. May be part of an intermediate translocation complex acting as a protein-conducting channel at the inner envelope. The protein is Protein TIC 214 of Solanum lycopersicum (Tomato).